A 497-amino-acid chain; its full sequence is Serine/arginine-rich protein PSR (497 aa).

Residues M1–A19 form the signal peptide. Residues A20–G366 lie on the Extracellular side of the membrane. N92, N193, N202, N261, and N283 each carry an N-linked (GlcNAc...) asparagine glycan. Residues L367 to I387 traverse the membrane as a helical segment. Residues Y388–D497 are Cytoplasmic-facing. Residues M424–G450 are necessary for phosphorylation by PSRPK in vitro. The span at R436–D447 shows a compositional bias: acidic residues. Residues R436–D497 are disordered. Residues G459–S471 show a composition bias toward basic residues. Basic and acidic residues predominate over residues G476 to D497.

Phosphorylated on serine residues in the RS domain by PSRPK.

It is found in the membrane. In Physarum polycephalum (Slime mold), this protein is Serine/arginine-rich protein PSR.